Reading from the N-terminus, the 75-residue chain is Small ribosomal subunit protein bS18 (75 aa).

This sequence belongs to the bacterial ribosomal protein bS18 family. In terms of assembly, part of the 30S ribosomal subunit. Forms a tight heterodimer with protein bS6.

In terms of biological role, binds as a heterodimer with protein bS6 to the central domain of the 16S rRNA, where it helps stabilize the platform of the 30S subunit. This Alteromonas mediterranea (strain DSM 17117 / CIP 110805 / LMG 28347 / Deep ecotype) protein is Small ribosomal subunit protein bS18.